The primary structure comprises 290 residues: Probable prolyl 4-hydroxylase 8 (290 aa).

At 1–19 the chain is on the cytoplasmic side; sequence MAKKPKQLRNKPRKSFSTQ. Residues 20–40 traverse the membrane as a helical; Signal-anchor for type II membrane protein segment; sequence TFTVVVLVLFVILILVGLGIF. The Lumenal portion of the chain corresponds to 41–290; it reads SLPSTNKTSS…TKWFHVHEYN (250 aa). N-linked (GlcNAc...) asparagine glycosylation occurs at asparagine 46. The region spanning 163–286 is the Fe2OG dioxygenase domain; that stretch reads NGEGLQVLHY…KWSSTKWFHV (124 aa). Fe cation contacts are provided by histidine 181 and aspartate 183. A glycan (N-linked (GlcNAc...) asparagine) is linked at asparagine 222. A Fe cation-binding site is contributed by histidine 267. Lysine 277 is a 2-oxoglutarate binding site.

Belongs to the P4HA family. Fe(2+) is required as a cofactor. The cofactor is L-ascorbate.

It localises to the endoplasmic reticulum membrane. The enzyme catalyses L-prolyl-[collagen] + 2-oxoglutarate + O2 = trans-4-hydroxy-L-prolyl-[collagen] + succinate + CO2. Its function is as follows. Catalyzes the post-translational formation of 4-hydroxyproline in -Xaa-Pro-Gly- sequences in proline-rich peptide sequences of plant glycoproteins and other proteins. Hydroxyprolines are important constituent of many plant cell wall glycoproteins such as extensins, hydroxyproline-rich glycoproteins, lectins and arabinogalactan proteins. This Arabidopsis thaliana (Mouse-ear cress) protein is Probable prolyl 4-hydroxylase 8.